The sequence spans 258 residues: Probable F-box protein At2g29610 (258 aa).

The segment at 1–25 (MVELSEIPGDPNGADPNNNPQEEDE) is disordered. Low complexity predominate over residues 8 to 20 (PGDPNGADPNNNP). Positions 28 to 74 (LPILLQLPEELIERIIAHFPQCYSPSPILVCETFRQVINSDHFYYVT) constitute an F-box domain.

The protein is Probable F-box protein At2g29610 of Arabidopsis thaliana (Mouse-ear cress).